Reading from the N-terminus, the 282-residue chain is Large ribosomal subunit protein uL2 (282 aa).

The disordered stretch occupies residues 230-282 (AMNPIDHPLGGGEGRSSGGRHPVSPWGMPAKGYKTRDKKKASSRLIVKRRGQK). Basic residues predominate over residues 265 to 282 (RDKKKASSRLIVKRRGQK).

The protein belongs to the universal ribosomal protein uL2 family. In terms of assembly, part of the 50S ribosomal subunit. Forms a bridge to the 30S subunit in the 70S ribosome.

In terms of biological role, one of the primary rRNA binding proteins. Required for association of the 30S and 50S subunits to form the 70S ribosome, for tRNA binding and peptide bond formation. It has been suggested to have peptidyltransferase activity; this is somewhat controversial. Makes several contacts with the 16S rRNA in the 70S ribosome. The protein is Large ribosomal subunit protein uL2 of Desulfovibrio desulfuricans (strain ATCC 27774 / DSM 6949 / MB).